The sequence spans 158 residues: Endoribonuclease YbeY (158 aa).

Zn(2+) contacts are provided by His-120, His-124, and His-130.

It belongs to the endoribonuclease YbeY family. Requires Zn(2+) as cofactor.

It is found in the cytoplasm. Its function is as follows. Single strand-specific metallo-endoribonuclease involved in late-stage 70S ribosome quality control and in maturation of the 3' terminus of the 16S rRNA. This Spiroplasma citri protein is Endoribonuclease YbeY.